The chain runs to 402 residues: Multidrug resistance protein MdtH (402 aa).

Over 1-12 the chain is Cytoplasmic; sequence MSRVSQARNLGK. The chain crosses the membrane as a helical span at residues 13-33; that stretch reads YFLLIDNMLVVLGFFVVFPLI. Residues 34–98 lie on the Periplasmic side of the membrane; that stretch reads SIRFVDQMGW…GFATMGIAHE (65 aa). Residues 99–116 form a helical membrane-spanning segment; it reads PWLLWFSCFLSGLGGTLF. At 117-138 the chain is on the cytoplasmic side; sequence DPPRSALVVKLIRPEQRDRFFS. The helical transmembrane segment at 139-159 threads the bilayer; the sequence is LLMMQDSAGAVIGALLGSWLL. Residues 160–164 are Periplasmic-facing; the sequence is QYDFR. A helical membrane pass occupies residues 165-185; that stretch reads LVCATGAILFILCALFNAWLL. At 186–213 the chain is on the cytoplasmic side; it reads PAWKLSTVRTPVREGMRRVMSDKRFVTY. Residues 214 to 234 traverse the membrane as a helical segment; the sequence is VLTLAGYYMLAVQVMLMLPIM. At 235 to 243 the chain is on the periplasmic side; sequence VNDIAGSPA. The chain crosses the membrane as a helical span at residues 244 to 264; that stretch reads AVKWMYAIEACLSLTLLYPIA. At 265–276 the chain is on the cytoplasmic side; sequence RWSEKRFRLEHR. A helical membrane pass occupies residues 277-297; the sequence is LMAGLLVMSLSMLPIGMVGNL. The Periplasmic portion of the chain corresponds to 298–299; the sequence is QQ. The chain crosses the membrane as a helical span at residues 300–320; that stretch reads LFTLICAFYIGSVIAEPARET. At 321–339 the chain is on the cytoplasmic side; that stretch reads LSASLADARARGSYMGFSR. Residues 340 to 360 traverse the membrane as a helical segment; the sequence is LGLAIGGAIGYIGGGWLFDMG. Over 361–367 the chain is Periplasmic; that stretch reads KALAQPE. The helical transmembrane segment at 368–388 threads the bilayer; the sequence is LPWMMLGIIGFITFLALGWQF. Residues 389–402 lie on the Cytoplasmic side of the membrane; the sequence is SHKRTPRRMLEPGA.

It belongs to the major facilitator superfamily. DHA1 family. MdtH (TC 2.A.1.2.21) subfamily.

It is found in the cell inner membrane. The protein is Multidrug resistance protein MdtH of Salmonella typhimurium (strain LT2 / SGSC1412 / ATCC 700720).